A 147-amino-acid chain; its full sequence is Ribonuclease H (147 aa).

Mg(2+) contacts are provided by aspartate 8, glutamate 46, aspartate 68, and aspartate 132.

This sequence belongs to the RNase H family. In terms of assembly, monomer. The cofactor is Mg(2+).

It is found in the cytoplasm. The catalysed reaction is Endonucleolytic cleavage to 5'-phosphomonoester.. Endonuclease that specifically degrades the RNA of RNA-DNA hybrids. The protein is Ribonuclease H of Geotalea uraniireducens (strain Rf4) (Geobacter uraniireducens).